The chain runs to 607 residues: Methylmalonate-semialdehyde dehydrogenase [acylating], mitochondrial (607 aa).

Residues 1–69 (MVRVKQKNLE…KLRSSSSTTT (69 aa)) are disordered. A mitochondrion-targeting transit peptide spans 1–98 (MVRVKQKNLE…QFLALRSSWL (98 aa)). A compositionally biased stretch (polar residues) spans 9-30 (LESYRSNGTYPPTWRNPTTSFA). Residues 42–51 (LKSKTKRRRL) are compositionally biased toward basic residues. The NAD(+) site is built by Phe-259, Lys-283, Glu-286, Lys-287, and Ser-336. Cys-391 functions as the Nucleophile in the catalytic mechanism. Glu-491 lines the NAD(+) pocket.

It belongs to the aldehyde dehydrogenase family.

The protein localises to the mitochondrion. The catalysed reaction is 2-methyl-3-oxopropanoate + NAD(+) + CoA + H2O = propanoyl-CoA + hydrogencarbonate + NADH + H(+). In Arabidopsis thaliana (Mouse-ear cress), this protein is Methylmalonate-semialdehyde dehydrogenase [acylating], mitochondrial (ALDH6B2).